Here is a 58-residue protein sequence, read N- to C-terminus: MKISFLLLLAIVICSIGWTEAQFTNVSCSASSQCWPVCEKLFGTYRGKCMNSKCRCYS.

A signal peptide spans 1–21 (MKISFLLLLAIVICSIGWTEA). At Gln22 the chain carries Pyrrolidone carboxylic acid. Intrachain disulfides connect Cys28/Cys49, Cys34/Cys54, and Cys38/Cys56.

Belongs to the short scorpion toxin superfamily. Potassium channel inhibitor family. Alpha-KTx 01 subfamily. Expressed by the venom gland.

Its subcellular location is the secreted. Functionally, potent blocker of both large-conductance calcium-activated potassium channels (KCa1.1/KCNMA1) and voltage-gated potassium channels (Kv1.3/KCNA3 and ERG1/Kv11.1/KCNH2). This chain is Potassium channel toxin alpha-KTx BmKcug1a, found in Olivierus martensii (Manchurian scorpion).